The chain runs to 352 residues: Uroporphyrinogen decarboxylase (352 aa).

Residues 26–30, D76, Y153, S208, and H323 contribute to the substrate site; that span reads RQAGR.

This sequence belongs to the uroporphyrinogen decarboxylase family. Homodimer.

The protein localises to the cytoplasm. It catalyses the reaction uroporphyrinogen III + 4 H(+) = coproporphyrinogen III + 4 CO2. Its pathway is porphyrin-containing compound metabolism; protoporphyrin-IX biosynthesis; coproporphyrinogen-III from 5-aminolevulinate: step 4/4. Catalyzes the decarboxylation of four acetate groups of uroporphyrinogen-III to yield coproporphyrinogen-III. The polypeptide is Uroporphyrinogen decarboxylase (Synechococcus sp. (strain CC9902)).